The sequence spans 102 residues: NADH-quinone oxidoreductase subunit K (102 aa).

3 helical membrane passes run leucine 5 to leucine 25, isoleucine 31 to phenylalanine 51, and phenylalanine 66 to phenylalanine 86.

This sequence belongs to the complex I subunit 4L family. NDH-1 is composed of 14 different subunits. Subunits NuoA, H, J, K, L, M, N constitute the membrane sector of the complex.

It localises to the cell inner membrane. The catalysed reaction is a quinone + NADH + 5 H(+)(in) = a quinol + NAD(+) + 4 H(+)(out). Functionally, NDH-1 shuttles electrons from NADH, via FMN and iron-sulfur (Fe-S) centers, to quinones in the respiratory chain. The immediate electron acceptor for the enzyme in this species is believed to be ubiquinone. Couples the redox reaction to proton translocation (for every two electrons transferred, four hydrogen ions are translocated across the cytoplasmic membrane), and thus conserves the redox energy in a proton gradient. In Parvibaculum lavamentivorans (strain DS-1 / DSM 13023 / NCIMB 13966), this protein is NADH-quinone oxidoreductase subunit K.